The following is a 318-amino-acid chain: Mechanosensory protein 3 (318 aa).

2 LIM zinc-binding domains span residues 27 to 86 (NKCY…DYSA) and 87 to 152 (HRCA…PMDD). A DNA-binding region (homeobox) is located at residues 214–273 (RRGPRTTIRQNQLDVLNEMFSNTPKPSKHARAKLALETGLSMRVIQVWFQNRRSKERRLK).

It localises to the nucleus. Its function is as follows. Specifies differentiation of the set of six touch receptor neurons. Binds cooperatively as a heterodimer with unc-86 to sites in the mec-3 gene promoter. The sequence is that of Mechanosensory protein 3 (mec-3) from Caenorhabditis briggsae.